Reading from the N-terminus, the 346-residue chain is B3 domain-containing protein At5g60142 (346 aa).

Positions 13–109 form a DNA-binding region, TF-B3; that stretch reads PKFFKVYLPD…CFNFCIYGRA (97 aa). Disordered stretches follow at residues 158-179 and 192-243; these read QDYN…ADND and TSSE…HDRQ. A compositionally biased stretch (acidic residues) spans 192–217; the sequence is TSSEDIIVIDDDDDDDDQDYGDDDHA. Residues 218-229 are compositionally biased toward basic and acidic residues; sequence DVEKERWRGVKT.

It is found in the nucleus. This is B3 domain-containing protein At5g60142 from Arabidopsis thaliana (Mouse-ear cress).